The sequence spans 203 residues: Non-specific lipid transfer protein GPI-anchored 20 (203 aa).

Positions 1–21 are cleaved as a signal peptide; sequence MSKIISLVVAMIAVLALPIRG. 4 cysteine pairs are disulfide-bonded: Cys29–Cys74, Cys40–Cys58, Cys59–Cys99, and Cys72–Cys108. Asn46, Asn50, and Asn88 each carry an N-linked (GlcNAc...) asparagine glycan. Residues 119-182 form a disordered region; the sequence is GPAATFGPSM…TSRPSETPSS (64 aa). Polar residues-rich tracts occupy residues 144-156 and 169-179; these read AAQT…TRPF and DGGSTSRPSET. Residue Ser172 is the site of GPI-anchor amidated serine attachment. Residues 173-203 constitute a propeptide, removed in mature form; sequence TSRPSETPSSAYALSPSLLFFSIALVALKFY.

The protein belongs to the plant LTP family. Expressed in seedlings, preferentially in hypocotyls and roots. Also observed in siliques and sepals.

It localises to the cell membrane. In terms of biological role, probable lipid transfer protein. In Arabidopsis thaliana (Mouse-ear cress), this protein is Non-specific lipid transfer protein GPI-anchored 20.